The chain runs to 131 residues: Global transcriptional regulator Spx 1 (131 aa).

Cysteine 10 and cysteine 13 are disulfide-bonded.

The protein belongs to the ArsC family. Spx subfamily. As to quaternary structure, interacts with the C-terminal domain of the alpha subunit of the RNAP.

The protein resides in the cytoplasm. Functionally, global transcriptional regulator that plays a key role in stress response and exerts either positive or negative regulation of genes. Acts by interacting with the C-terminal domain of the alpha subunit of the RNA polymerase (RNAP). This interaction can enhance binding of RNAP to the promoter region of target genes and stimulate their transcription, or block interaction of RNAP with activator. The polypeptide is Global transcriptional regulator Spx 1 (Bacillus anthracis).